We begin with the raw amino-acid sequence, 216 residues long: FMN-dependent NADH:quinone oxidoreductase 3 (216 aa).

FMN contacts are provided by residues Ser10 and 16–18 (SAS).

The protein belongs to the azoreductase type 1 family. As to quaternary structure, homodimer. FMN serves as cofactor.

The enzyme catalyses 2 a quinone + NADH + H(+) = 2 a 1,4-benzosemiquinone + NAD(+). The catalysed reaction is N,N-dimethyl-1,4-phenylenediamine + anthranilate + 2 NAD(+) = 2-(4-dimethylaminophenyl)diazenylbenzoate + 2 NADH + 2 H(+). Its function is as follows. Quinone reductase that provides resistance to thiol-specific stress caused by electrophilic quinones. In terms of biological role, also exhibits azoreductase activity. Catalyzes the reductive cleavage of the azo bond in aromatic azo compounds to the corresponding amines. This Pseudomonas fluorescens (strain ATCC BAA-477 / NRRL B-23932 / Pf-5) protein is FMN-dependent NADH:quinone oxidoreductase 3.